The chain runs to 328 residues: GTPase Obg (328 aa).

The Obg domain occupies 1-159 (MNFIDEVKIY…MWVQLSLKLL (159 aa)). Residues 160 to 327 (SDVGLVGLPN…IIKLALQTIK (168 aa)) enclose the OBG-type G domain. GTP is bound by residues 166–173 (GLPNAGKS), 191–195 (FTTLV), 212–215 (DIPG), 279–282 (NKID), and 308–310 (STY). Mg(2+) is bound by residues Ser173 and Thr193.

The protein belongs to the TRAFAC class OBG-HflX-like GTPase superfamily. OBG GTPase family. As to quaternary structure, monomer. Mg(2+) is required as a cofactor.

It is found in the cytoplasm. Its function is as follows. An essential GTPase which binds GTP, GDP and possibly (p)ppGpp with moderate affinity, with high nucleotide exchange rates and a fairly low GTP hydrolysis rate. Plays a role in control of the cell cycle, stress response, ribosome biogenesis and in those bacteria that undergo differentiation, in morphogenesis control. The chain is GTPase Obg from Rickettsia bellii (strain RML369-C).